The primary structure comprises 100 residues: MDLSPREKDKLLIFTAGLVAERRLARGVKLNYPEAMAYISAALLEGARDGQTVAELMHYGTTLLSREQVMEGVPEMIPEIQVEATFPDGTKLVTVHQPIA.

This sequence belongs to the urease gamma subunit family. Heterotrimer of UreA (gamma), UreB (beta) and UreC (alpha) subunits. Three heterotrimers associate to form the active enzyme.

The protein resides in the cytoplasm. The enzyme catalyses urea + 2 H2O + H(+) = hydrogencarbonate + 2 NH4(+). It participates in nitrogen metabolism; urea degradation; CO(2) and NH(3) from urea (urease route): step 1/1. The protein is Urease subunit gamma of Stutzerimonas stutzeri (strain A1501) (Pseudomonas stutzeri).